The sequence spans 435 residues: Serine hydroxymethyltransferase (435 aa).

(6S)-5,6,7,8-tetrahydrofolate contacts are provided by residues Leu-133 and 137–139; that span reads GHL. Position 242 is an N6-(pyridoxal phosphate)lysine (Lys-242).

This sequence belongs to the SHMT family. In terms of assembly, homodimer. Pyridoxal 5'-phosphate serves as cofactor.

It is found in the cytoplasm. The catalysed reaction is (6R)-5,10-methylene-5,6,7,8-tetrahydrofolate + glycine + H2O = (6S)-5,6,7,8-tetrahydrofolate + L-serine. The protein operates within one-carbon metabolism; tetrahydrofolate interconversion. It functions in the pathway amino-acid biosynthesis; glycine biosynthesis; glycine from L-serine: step 1/1. Functionally, catalyzes the reversible interconversion of serine and glycine with tetrahydrofolate (THF) serving as the one-carbon carrier. This reaction serves as the major source of one-carbon groups required for the biosynthesis of purines, thymidylate, methionine, and other important biomolecules. Also exhibits THF-independent aldolase activity toward beta-hydroxyamino acids, producing glycine and aldehydes, via a retro-aldol mechanism. In Sphingopyxis alaskensis (strain DSM 13593 / LMG 18877 / RB2256) (Sphingomonas alaskensis), this protein is Serine hydroxymethyltransferase.